The sequence spans 919 residues: Envelope glycoprotein B (919 aa).

A signal peptide spans 1–28 (MSKDSTSLGVRTIVIACLVLLGCCIVEA). The Virion surface portion of the chain corresponds to 29 to 788 (VPTTPSSQPS…SGIASFINNP (760 aa)). Disulfide bonds link cysteine 81/cysteine 586, cysteine 98/cysteine 542, cysteine 172/cysteine 237, cysteine 330/cysteine 378, and cysteine 607/cysteine 647. An N-linked (GlcNAc...) asparagine; by host glycan is attached at asparagine 106. The interval 138 to 144 (VWKGYSH) is involved in fusion and/or binding to host membrane. An N-linked (GlcNAc...) asparagine; by host glycan is attached at asparagine 216. The segment at 223–231 (GWMPWRHYT) is involved in fusion and/or binding to host membrane. Residues asparagine 321, asparagine 364, asparagine 438, asparagine 456, asparagine 493, asparagine 496, and asparagine 499 are each glycosylated (N-linked (GlcNAc...) asparagine; by host). Asparagine 666 and asparagine 688 each carry an N-linked (GlcNAc...) asparagine; by host glycan. 2 hydrophobic membrane proximal region regions span residues 733-786 (IDSV…SFIN) and 765-785 (TLVLGAAGAVVSTVSGIASFI). Residues 789 to 809 (FGGLAIGLLVIAGLVAAFFAY) traverse the membrane as a helical segment. The Intravirion portion of the chain corresponds to 810 to 919 (RYVMQLRSNP…DDPMESEKMV (110 aa)). Positions 864–867 (YMSM) match the Golgi targeting motif. The disordered stretch occupies residues 900–919 (RGPKYTRLREDDPMESEKMV). An Internalization motif motif is present at residues 904–907 (YTRL). The segment covering 906–919 (RLREDDPMESEKMV) has biased composition (basic and acidic residues).

Belongs to the herpesviridae glycoprotein B family. Homotrimer; disulfide-linked. Binds to heparan sulfate proteoglycans. Interacts with gH/gL heterodimer. A proteolytic cleavage by host furin generates two subunits that remain linked by disulfide bonds.

The protein resides in the virion membrane. The protein localises to the host cell membrane. Its subcellular location is the host endosome membrane. It localises to the host Golgi apparatus membrane. Functionally, envelope glycoprotein that forms spikes at the surface of virion envelope. Essential for the initial attachment to heparan sulfate moieties of the host cell surface proteoglycans. Involved in fusion of viral and cellular membranes leading to virus entry into the host cell. Following initial binding to its host receptors, membrane fusion is mediated by the fusion machinery composed at least of gB and the heterodimer gH/gL. May be involved in the fusion between the virion envelope and the outer nuclear membrane during virion egress. This chain is Envelope glycoprotein B, found in Equus caballus (Horse).